The chain runs to 239 residues: Uridylate kinase (239 aa).

10–13 is an ATP binding site; it reads KFSG. Positions 18–23 are involved in allosteric activation by GTP; sequence GENGFG. A UMP-binding site is contributed by G52. G53 and R57 together coordinate ATP. Residues D73 and 134–141 each bind UMP; that span reads TGNPYFTT. ATP-binding residues include T161, Y167, and D170.

Belongs to the UMP kinase family. In terms of assembly, homohexamer.

It is found in the cytoplasm. The enzyme catalyses UMP + ATP = UDP + ADP. The protein operates within pyrimidine metabolism; CTP biosynthesis via de novo pathway; UDP from UMP (UMPK route): step 1/1. With respect to regulation, allosterically activated by GTP. Inhibited by UTP. Catalyzes the reversible phosphorylation of UMP to UDP. The polypeptide is Uridylate kinase (Campylobacter jejuni subsp. jejuni serotype O:2 (strain ATCC 700819 / NCTC 11168)).